Here is a 109-residue protein sequence, read N- to C-terminus: Death-associated protein-like 1 homolog (109 aa).

Disordered stretches follow at residues 1-51 (MVQL…KPRS) and 76-100 (FPETPVSVRHSRVRPSVEKPHISRI). Residues 31 to 50 (KSADENANVEKETRKTDKPR) show a composition bias toward basic and acidic residues.

Belongs to the DAP-DAPL1 family. In terms of assembly, associates with ribosomes; preventing translation. Interacts with eiF5a (eif5a and eif5a2); preventing translation.

Its function is as follows. Ribosome-binding protein that promotes ribosome hibernation, a process during which ribosomes are stabilized in an inactive state and preserved from proteasomal degradation. Acts via its association with eiF5a (eif5a and eif5a2) at the polypeptide exit tunnel of the ribosome, preventing mRNA translation. Plays a key role in ribosome hibernation in the mature egg by preventing mRNA translation, leading to ribosome inactivation. Ribosomes, which are produced in large quantities during oogenesis, are stored and translationally repressed in the egg and early embryo. The chain is Death-associated protein-like 1 homolog from Danio rerio (Zebrafish).